Here is a 426-residue protein sequence, read N- to C-terminus: Endothelin-1 receptor (426 aa).

The signal sequence occupies residues 1–20 (MGVLCFLASFWLALVGGAIA). The Extracellular segment spans residues 21-80 (DNAERYSANLSSHVEDFTPFPGTEFNFLGTTLQPPNLALPSNGSMHGYCPQQTKITTAFK). Asn-29 and Asn-62 each carry an N-linked (GlcNAc...) asparagine glycan. The helical transmembrane segment at 81-102 (YINTVISCTIFIVGMVGNATLL) threads the bilayer. The Cytoplasmic portion of the chain corresponds to 103–112 (RIIYQNKCMR). The chain crosses the membrane as a helical span at residues 113 to 132 (NGPNALIASLALGDLIYVVI). Residues 133–159 (DLPINVFKLLAGRWPFDHNDFGVFLCK) lie on the Extracellular side of the membrane. A disulfide bond links Cys-158 and Cys-239. Residues 160–181 (LFPFLQKSSVGITVLNLCALSV) traverse the membrane as a helical segment. The Cytoplasmic portion of the chain corresponds to 182-205 (DRYRAVASWSRVQGIGIPLITAIE). Residues 206 to 229 (IVSIWILSFILAIPEAIGFVMVPF) form a helical membrane-spanning segment. Residues 230–256 (EYKGEQHRTCMLNATTKFMEFYQDVKD) are Extracellular-facing. A helical membrane pass occupies residues 257-278 (WWLFGFYFCMPLVCTAIFYTLM). At 279 to 306 (TCEMLNRRNGSLRIALSEHLKQRREVAK) the chain is on the cytoplasmic side. The helical transmembrane segment at 307–328 (TVFCLVVIFALCWFPLHLSRIL) threads the bilayer. Residues 329–347 (KKTVYDEMDKNRCELLSFL) lie on the Extracellular side of the membrane. Residues 348 to 372 (LLMDYIGINLATMNSCINPIALYFV) form a helical membrane-spanning segment. Residues 373 to 426 (SKKFKNCFQSCLCCCCHQSKSLMTSVPMNGTSIQWKNQEQNHNTERSSHKDSMN) are Cytoplasmic-facing. Position 424 is a phosphoserine (Ser-424).

It belongs to the G-protein coupled receptor 1 family. Endothelin receptor subfamily. EDNRA sub-subfamily. Interacts with HDAC7 and KAT5. As to expression, predominantly expressed in vascular smooth muscle cells of a variety of issues, bronchial smooth muscle cells, myocardium, and the pituitary gland.

The protein resides in the cell membrane. Receptor for endothelin-1. Mediates its action by association with G proteins that activate a phosphatidylinositol-calcium second messenger system. The rank order of binding affinities for ET-A is: ET1 &gt; ET2 &gt;&gt; ET3. This is Endothelin-1 receptor from Rattus norvegicus (Rat).